A 154-amino-acid chain; its full sequence is Ribonuclease 8 (154 aa).

The signal sequence occupies residues 1-27 (MAPARAGCCPLLLLLLGLWVAEVLVRA). H42 functions as the Proton acceptor in the catalytic mechanism. 4 disulfides stabilise this stretch: C50–C93, C64–C118, C82–C133, and C89–C96. Substrate-binding positions include 65-69 (KDLNT) and K90. The active-site Proton donor is the H149.

Belongs to the pancreatic ribonuclease family. In terms of tissue distribution, expressed prominently in the placenta and is not detected in any other tissues examined.

The protein localises to the secreted. Functionally, has a low ribonuclease activity. The chain is Ribonuclease 8 (RNASE8) from Homo sapiens (Human).